A 416-amino-acid chain; its full sequence is Lipid II:glycine glycyltransferase (416 aa).

The protein belongs to the FemABX family.

The protein resides in the cytoplasm. It carries out the reaction beta-D-GlcNAc-(1-&gt;4)-Mur2Ac(oyl-L-Ala-D-isoglutaminyl-L-Lys-D-Ala-D-Ala)-di-trans,octa-cis-undecaprenyl diphosphate + glycyl-tRNA(Gly) = beta-D-GlcNAc-(1-&gt;4)-Mur2Ac(oyl-L-Ala-D-isoglutaminyl-L-Lys-(N(6)-Gly)-D-Ala-D-Ala)-di-trans,octa-cis-undecaprenyl diphosphate + tRNA(Gly) + H(+). In terms of biological role, catalyzes the incorporation of amino acid(s) into the interchain peptide bridge of peptidoglycan, using aminoacyl-tRNA as amino acid donor. This chain is Lipid II:glycine glycyltransferase (femX), found in Staphylococcus epidermidis (strain ATCC 35984 / DSM 28319 / BCRC 17069 / CCUG 31568 / BM 3577 / RP62A).